We begin with the raw amino-acid sequence, 725 residues long: 1,4-alpha-glucan branching enzyme GlgB (725 aa).

The Nucleophile role is filled by Asp406. Glu459 (proton donor) is an active-site residue.

This sequence belongs to the glycosyl hydrolase 13 family. GlgB subfamily. Monomer.

The catalysed reaction is Transfers a segment of a (1-&gt;4)-alpha-D-glucan chain to a primary hydroxy group in a similar glucan chain.. Its pathway is glycan biosynthesis; glycogen biosynthesis. Functionally, catalyzes the formation of the alpha-1,6-glucosidic linkages in glycogen by scission of a 1,4-alpha-linked oligosaccharide from growing alpha-1,4-glucan chains and the subsequent attachment of the oligosaccharide to the alpha-1,6 position. This Methylobacillus flagellatus (strain ATCC 51484 / DSM 6875 / VKM B-1610 / KT) protein is 1,4-alpha-glucan branching enzyme GlgB.